The primary structure comprises 170 residues: NADH-quinone oxidoreductase subunit B (170 aa).

4 residues coordinate [4Fe-4S] cluster: cysteine 37, cysteine 38, cysteine 102, and cysteine 131.

This sequence belongs to the complex I 20 kDa subunit family. As to quaternary structure, NDH-1 is composed of 14 different subunits. Subunits NuoB, C, D, E, F, and G constitute the peripheral sector of the complex. [4Fe-4S] cluster is required as a cofactor.

The protein resides in the cell inner membrane. The catalysed reaction is a quinone + NADH + 5 H(+)(in) = a quinol + NAD(+) + 4 H(+)(out). NDH-1 shuttles electrons from NADH, via FMN and iron-sulfur (Fe-S) centers, to quinones in the respiratory chain. The immediate electron acceptor for the enzyme in this species is believed to be ubiquinone. Couples the redox reaction to proton translocation (for every two electrons transferred, four hydrogen ions are translocated across the cytoplasmic membrane), and thus conserves the redox energy in a proton gradient. This chain is NADH-quinone oxidoreductase subunit B, found in Citrifermentans bemidjiense (strain ATCC BAA-1014 / DSM 16622 / JCM 12645 / Bem) (Geobacter bemidjiensis).